The sequence spans 417 residues: Phosphoribosylamine--glycine ligase (417 aa).

An ATP-grasp domain is found at 108–307 (KRIMDEAGVP…LSTLLFAAAT (200 aa)). An ATP-binding site is contributed by 134–188 (LDEFGAPYVVKADGLAAGKGVIVTEDRAAALAHAARYLTHGSVLVEEFLDGEEVS). Mg(2+) contacts are provided by E277 and N279.

It belongs to the GARS family. Mg(2+) is required as a cofactor. Requires Mn(2+) as cofactor.

The enzyme catalyses 5-phospho-beta-D-ribosylamine + glycine + ATP = N(1)-(5-phospho-beta-D-ribosyl)glycinamide + ADP + phosphate + H(+). It functions in the pathway purine metabolism; IMP biosynthesis via de novo pathway; N(1)-(5-phospho-D-ribosyl)glycinamide from 5-phospho-alpha-D-ribose 1-diphosphate: step 2/2. The polypeptide is Phosphoribosylamine--glycine ligase (Leifsonia xyli subsp. xyli (strain CTCB07)).